A 309-amino-acid chain; its full sequence is Oxygen-dependent coproporphyrinogen-III oxidase (309 aa).

Substrate is bound at residue Ser-94. A divalent metal cation is bound by residues His-98 and His-108. His-108 functions as the Proton donor in the catalytic mechanism. Residue 110-112 participates in substrate binding; it reads NVR. A divalent metal cation is bound by residues His-147 and His-177. The important for dimerization stretch occupies residues 242–277; it reads YVEFNLVWDRGTLFGLQTGGRTESILMSLPPLVRWE. 260-262 provides a ligand contact to substrate; that stretch reads GGR.

The protein belongs to the aerobic coproporphyrinogen-III oxidase family. In terms of assembly, homodimer. Requires a divalent metal cation as cofactor.

Its subcellular location is the cytoplasm. The catalysed reaction is coproporphyrinogen III + O2 + 2 H(+) = protoporphyrinogen IX + 2 CO2 + 2 H2O. Its pathway is porphyrin-containing compound metabolism; protoporphyrin-IX biosynthesis; protoporphyrinogen-IX from coproporphyrinogen-III (O2 route): step 1/1. Its function is as follows. Involved in the heme biosynthesis. Catalyzes the aerobic oxidative decarboxylation of propionate groups of rings A and B of coproporphyrinogen-III to yield the vinyl groups in protoporphyrinogen-IX. In Yersinia pseudotuberculosis serotype O:1b (strain IP 31758), this protein is Oxygen-dependent coproporphyrinogen-III oxidase.